The sequence spans 1025 residues: Leucyl-cystinyl aminopeptidase (1025 aa).

N-acetylmethionine is present on M1. Over 1 to 109 (MESFTNDRLQ…DGTCSLPSAR (109 aa)) the chain is Cytoplasmic. The Dileucine internalization motif signature appears at 53–54 (LL). Y70 bears the Phosphotyrosine mark. A Dileucine internalization motif motif is present at residues 76 to 77 (LL). Residues S80 and S91 each carry the phosphoserine modification. Residues 96–101 (RQSPDG) form a tankyrase binding region. Residues 110 to 131 (TLVICVFVIVVAVSVIMVIYLL) traverse the membrane as a helical; Signal-anchor for type II membrane protein segment. Over 132–1025 (PRCTFTKEGC…RNLKTLSQWL (894 aa)) the chain is Extracellular. 5 N-linked (GlcNAc...) asparagine glycosylation sites follow: N145, N184, N215, N256, and N266. Position 295 (E295) interacts with substrate. N-linked (GlcNAc...) asparagine glycosylation is found at N368 and N374. Residue 428–432 (GAMEN) participates in substrate binding. An N-linked (GlcNAc...) asparagine glycan is attached at N447. H464 provides a ligand contact to Zn(2+). Catalysis depends on E465, which acts as the Proton acceptor. H468 and E487 together coordinate Zn(2+). N-linked (GlcNAc...) asparagine glycosylation is found at N525, N578, N664, N682, N695, N758, N834, N850, and N989.

It belongs to the peptidase M1 family. In terms of assembly, homodimer. Binds tankyrases 1 and 2. Requires Zn(2+) as cofactor.

It is found in the cell membrane. The protein localises to the endomembrane system. It carries out the reaction Release of an N-terminal amino acid, Cys-|-Xaa-, in which the half-cystine residue is involved in a disulfide loop, notably in oxytocin or vasopressin. Hydrolysis rates on a range of aminoacyl arylamides exceed that for the cystinyl derivative, however.. Functionally, release of an N-terminal amino acid, cleave before cysteine, leucine as well as other amino acids. Degrades peptide hormones such as oxytocin, vasopressin and angiotensin III, and plays a role in maintaining homeostasis during pregnancy. May be involved in the inactivation of neuronal peptides in the brain. Cleaves Met-enkephalin and dynorphin. Binds angiotensin IV and may be the angiotensin IV receptor in the brain. This Mus musculus (Mouse) protein is Leucyl-cystinyl aminopeptidase (Lnpep).